The following is a 406-amino-acid chain: Tyrosine--tRNA ligase (406 aa).

Tyr35 contributes to the L-tyrosine binding site. Residues Pro40–His49 carry the 'HIGH' region motif. L-tyrosine is bound by residues Tyr168 and Gln172. The 'KMSKS' region signature appears at Lys228–Thr232. Position 231 (Lys231) interacts with ATP. Residues Leu340 to Glu404 enclose the S4 RNA-binding domain.

The protein belongs to the class-I aminoacyl-tRNA synthetase family. TyrS type 1 subfamily. As to quaternary structure, homodimer.

The protein resides in the cytoplasm. The enzyme catalyses tRNA(Tyr) + L-tyrosine + ATP = L-tyrosyl-tRNA(Tyr) + AMP + diphosphate + H(+). Functionally, catalyzes the attachment of tyrosine to tRNA(Tyr) in a two-step reaction: tyrosine is first activated by ATP to form Tyr-AMP and then transferred to the acceptor end of tRNA(Tyr). The sequence is that of Tyrosine--tRNA ligase from Clostridium beijerinckii (strain ATCC 51743 / NCIMB 8052) (Clostridium acetobutylicum).